The sequence spans 1008 residues: SPAMPVPGPMGPMGPRGPPGSPGASGPQGFGPAGPPGKNGEDGESGKPGRGGERGPPGPQGARGFSGLDGAKGDSGPAGPKGESGAPGENGTPGAMGPRGAAGAAGARGNDGAAGAAGPPGPTGPAGPPGFPGGPGAKGDAGAQGGRGPEGPAGARGEPGNPGPAGAAGPSGNPGTDGAAGPKGTPGAAGVAGAPGFPGPRGPSGPQGAAGAPGPKGEAGAKGEAGAPGVQGPPGPSGEEGKRGARGEPGAAGARGGPGGRGFPGTDGPAGPKGATGERGAPGAVGPKGATGEPGRTGEPGLPGAKGMTGSPGSPGPDGKTGPAGPSGQDGRPGPPGPVGARGQPGVMGFPGPKGAAGEGGKPGERGPSGPAGPAGERGEQGPAGAPGFQGLPGPQGALGETGKPGEQGLPGEAGATGPAGARGDRGFPGERGAKGDAGAPGAPGAQGPPGLQGMPGERGAAGLPGLRGDRGDQGAKGADGAPGKDGPRGLTGPLGLPGPAGATGDKGESGPAGAVGPAGARGAPGERGESGPPGPAGFAGPPGADGQPGAKGEAGDNGAKGDAGPPGAAGPTGAPGPQGPVGNTGAKGARATGFPGAAGRVGPPGPSGNPGPPGPAGGPGKEGPKGNRGETGPAGRPGELGAAGPPGPAGEKGSPGSEGATGSAGLPGPQGLAGQRGLPGQRGERGFPGLPGPSGEAGGPSGPGGERGPPGPMGPPGLAGAPGEPGREGSPGNEGSAGRDGAAGPKGDRGESGPSGAPGAPGPPGAPGPVGPAGKNGDRGETGPAGPAGSAGPSGPRGPAGAPGLRGDKGESGEAGERRGFTGMQGPPGPSGSSGEQGPAGAAGPAGPRGPAGSAGSPGKDGMSGLPGPTGPPGPRSGEMGPAGPPGPPGPPGAPGAPGGGFDLGFLSQPQEKAPDPFRDRDLEVDSTLKSLSQQLEQLRSPDGTRSKPEDVNLQLTFLRNSVAYMDASAGNLKKATSRLPLLDLAPMDVGAPDQEFGLEVGPVCFL.

The segment covering 1 to 21 (SPAMPVPGPMGPMGPRGPPGS) has biased composition (pro residues). A disordered region spans residues 1–920 (SPAMPVPGPM…PQEKAPDPFR (920 aa)). Residues 39 to 53 (NGEDGESGKPGRGGE) show a composition bias toward basic and acidic residues. The segment covering 92-117 (TPGAMGPRGAAGAAGARGNDGAAGAA) has biased composition (low complexity). Residues 119-132 (PPGPTGPAGPPGFP) show a composition bias toward pro residues. The segment covering 133 to 151 (GGPGAKGDAGAQGGRGPEG) has biased composition (gly residues). Composition is skewed to low complexity over residues 152–195 (PAGA…AGAP) and 204–230 (SGPQGAAGAPGPKGEAGAKGEAGAPGV). Over residues 253 to 265 (GARGGPGGRGFPG) the composition is skewed to gly residues. Composition is skewed to low complexity over residues 339–354 (VGARGQPGVMGFPGPK) and 410–422 (LPGEAGATGPAGA). A compositionally biased stretch (basic and acidic residues) spans 423 to 435 (RGDRGFPGERGAK). Composition is skewed to low complexity over residues 437 to 456 (DAGAPGAPGAQGPPGLQGMP), 489 to 524 (RGLTGPLGLPGPAGATGDKGESGPAGAVGPAGARGA), and 537 to 573 (AGFAGPPGADGQPGAKGEAGDNGAKGDAGPPGAAGPT). Positions 604 to 617 (PPGPSGNPGPPGPA) are enriched in pro residues. A compositionally biased stretch (low complexity) spans 634-661 (PAGRPGELGAAGPPGPAGEKGSPGSEGA). Residues 696-709 (GEAGGPSGPGGERG) are compositionally biased toward gly residues. The segment covering 717–735 (PGLAGAPGEPGREGSPGNE) has biased composition (low complexity). A compositionally biased stretch (pro residues) spans 761–771 (APGPPGAPGPV). The segment covering 785–806 (PAGPAGSAGPSGPRGPAGAPGL) has biased composition (low complexity). The segment covering 807–821 (RGDKGESGEAGERRG) has biased composition (basic and acidic residues). The segment covering 832-868 (SGSSGEQGPAGAAGPAGPRGPAGSAGSPGKDGMSGLP) has biased composition (low complexity). Pro residues predominate over residues 884–896 (AGPPGPPGPPGAP). In terms of domain architecture, Fibrillar collagen NC1 spans 978 to 1008 (TSRLPLLDLAPMDVGAPDQEFGLEVGPVCFL).

This sequence belongs to the fibrillar collagen family.

The protein resides in the secreted. Its subcellular location is the extracellular space. It localises to the extracellular matrix. The protein is Collagen, type I, alpha 1a of Epinephelus aeneus (White grouper).